Reading from the N-terminus, the 66-residue chain is Beta-mammal toxin Co3 (66 aa).

The LCN-type CS-alpha/beta domain maps to 1-66; sequence KEGYIVNYYD…VWPLPNKTCN (66 aa). Intrachain disulfides connect C12–C65, C16–C41, C25–C46, and C29–C48.

In terms of tissue distribution, expressed by the venom gland.

It is found in the secreted. Functionally, beta toxins bind voltage-independently at site-4 of sodium channels (Nav) and shift the voltage of activation toward more negative potentials thereby affecting sodium channel activation and promoting spontaneous and repetitive firing. This toxin acts on human Nav1.2/SCN2A, Nav1.4/SCN4A and Nav1.6/SCN8A voltage-gated sodium channels. Also, it reduces the peak of sodium currents in Nav1.5/SCN5A at all potentials. In vivo, is lethal to mice when intraperitoneally injected at a dose of 5ug. No activity is observed when injected into crickets or woodlice. This chain is Beta-mammal toxin Co3, found in Centruroides ornatus (Scorpion).